Consider the following 528-residue polypeptide: Acid-sensing ion channel 1 (528 aa).

Residues 1–49 (MELKAEEEEVGGVQPVSIQAFASSSTLHGLAHIFSYERLSLKRALWALC) are Cytoplasmic-facing. A helical transmembrane segment spans residues 50-66 (FLGSLAVLLCVCTERVQ). The Extracellular segment spans residues 67–427 (YYFHYHHVTK…ETIEQKKAYE (361 aa)). 7 disulfides stabilise this stretch: Cys-93-Cys-194, Cys-172-Cys-179, Cys-290-Cys-367, Cys-310-Cys-363, Cys-314-Cys-361, Cys-323-Cys-345, and Cys-325-Cys-337. N-linked (GlcNAc...) asparagine glycans are attached at residues Asn-368 and Asn-395. A discontinuously helical transmembrane segment spans residues 428–458 (IAGLLGDIGGQMGLFIGASILTVLELFDYAY). The short motif at 444 to 446 (GAS) is the GAS motif; ion selectivity filter element. Over 459–528 (EVIKHKLCRR…ARGTFEDFTC (70 aa)) the chain is Cytoplasmic. A Phosphoserine; by PKA modification is found at Ser-479. Ser-499 carries the post-translational modification Phosphoserine.

This sequence belongs to the amiloride-sensitive sodium channel (TC 1.A.6) family. ASIC1 subfamily. As to quaternary structure, forms functional homotrimeric channels. Forms heterotrimers with other ASIC proteins, resulting in channels with distinct properties. Interacts with PICK1; regulates ASIC1 clustering in membranes. Interacts with STOM; alters heterotrimeric channels activity. Post-translationally, pH-gating could be regulated by serine proteases. In terms of processing, phosphorylation by PKA regulates interaction with PICK1 and subcellular localization. Phosphorylation by PKC may regulate the channel. Expressed in neurons throughout the central and peripheral nervous system.

The protein resides in the cell membrane. Its subcellular location is the postsynaptic cell membrane. It localises to the cell projection. The protein localises to the dendrite. The catalysed reaction is Na(+)(in) = Na(+)(out). The enzyme catalyses K(+)(in) = K(+)(out). It carries out the reaction Li(+)(in) = Li(+)(out). It catalyses the reaction Ca(2+)(in) = Ca(2+)(out). With respect to regulation, potentiated by FMRFamide-related neuropeptides, which are induced during inflammation and modulate pain responses. Inhibited by the diuretic drug amiloride. Spider venom psalmotoxin-1 inhibits the channel by locking it in its desensitized conformation. The homotrimeric channel is inhibited by the spider venom pi-theraphotoxin-Hm3a. Homotrimeric and heterotrimeric (with ASIC2 isoform 1) channels are inhibited by the snake venom mambalgin-1, which prevents proton-induced transitions from the resting closed state to the active and/or desensitized states. Inhibited by Texas coral snake toxin MitTx1. Its function is as follows. Forms voltage-independent, pH-gated trimeric sodium channels that act as postsynaptic excitatory receptors in the nervous system, playing a crucial role in regulating synaptic plasticity, learning, and memory. Upon extracellular pH drop this channel elicits transient, fast activating, and completely desensitizing inward currents. Displays high selectivity for sodium ions but can also permit the permeation of other cations. Regulates more or less directly intracellular calcium concentration and CaMKII phosphorylation, and thereby the density of dendritic spines. Modulates neuronal activity in the circuits underlying innate fear. Has high selectivity for sodium ions, but can also be permeable to other cations including calcium, lithium and potassium. Functionally, produces acid activated currents with a reduced amplitude and inactivates faster. Has high selectivity for sodium ions but also supports a calcium-mediated current which is sustained and maintained as long as acidic conditions are present. Also potentially permeable to lithium and potassium. In terms of biological role, has no measurable proton-gated sodium channel activity in vitro. This Homo sapiens (Human) protein is Acid-sensing ion channel 1.